A 202-amino-acid chain; its full sequence is Glycerol-3-phosphate acyltransferase (202 aa).

4 helical membrane-spanning segments follow: residues 2 to 22 (ANLL…AVVV), 80 to 100 (LNET…LFPV), 119 to 139 (AIDP…AFFF), and 158 to 178 (VLMN…VLLI).

Belongs to the PlsY family. In terms of assembly, probably interacts with PlsX.

The protein localises to the cell inner membrane. The enzyme catalyses an acyl phosphate + sn-glycerol 3-phosphate = a 1-acyl-sn-glycero-3-phosphate + phosphate. It participates in lipid metabolism; phospholipid metabolism. Its function is as follows. Catalyzes the transfer of an acyl group from acyl-phosphate (acyl-PO(4)) to glycerol-3-phosphate (G3P) to form lysophosphatidic acid (LPA). This enzyme utilizes acyl-phosphate as fatty acyl donor, but not acyl-CoA or acyl-ACP. This Cupriavidus necator (strain ATCC 17699 / DSM 428 / KCTC 22496 / NCIMB 10442 / H16 / Stanier 337) (Ralstonia eutropha) protein is Glycerol-3-phosphate acyltransferase.